The following is a 621-amino-acid chain: Chaperone protein DnaK (621 aa).

At Thr-202 the chain carries Phosphothreonine; by autocatalysis. A disordered region spans residues 596-621 (SQFAQAAKQNEEKKEEDKKDSEESKN). The span at 604 to 621 (QNEEKKEEDKKDSEESKN) shows a compositional bias: basic and acidic residues.

Belongs to the heat shock protein 70 family.

Acts as a chaperone. This Malacoplasma penetrans (strain HF-2) (Mycoplasma penetrans) protein is Chaperone protein DnaK.